Here is a 295-residue protein sequence, read N- to C-terminus: 4-hydroxy-tetrahydrodipicolinate synthase 1 (295 aa).

T46 contributes to the pyruvate binding site. Y134 acts as the Proton donor/acceptor in catalysis. K162 acts as the Schiff-base intermediate with substrate in catalysis. Residue V204 participates in pyruvate binding.

It belongs to the DapA family. In terms of assembly, homotetramer; dimer of dimers.

Its subcellular location is the cytoplasm. It catalyses the reaction L-aspartate 4-semialdehyde + pyruvate = (2S,4S)-4-hydroxy-2,3,4,5-tetrahydrodipicolinate + H2O + H(+). Its pathway is amino-acid biosynthesis; L-lysine biosynthesis via DAP pathway; (S)-tetrahydrodipicolinate from L-aspartate: step 3/4. Catalyzes the condensation of (S)-aspartate-beta-semialdehyde [(S)-ASA] and pyruvate to 4-hydroxy-tetrahydrodipicolinate (HTPA). The protein is 4-hydroxy-tetrahydrodipicolinate synthase 1 of Halalkalibacterium halodurans (strain ATCC BAA-125 / DSM 18197 / FERM 7344 / JCM 9153 / C-125) (Bacillus halodurans).